The following is a 412-amino-acid chain: uncharacterized protein (412 aa).

His49 is a binding site for Zn(2+). Glu52 functions as the Proton acceptor in the catalytic mechanism. Zn(2+)-binding residues include His53 and Glu129.

This sequence belongs to the peptidase M16 family. Zn(2+) serves as cofactor.

This is an uncharacterized protein from Rickettsia typhi (strain ATCC VR-144 / Wilmington).